A 486-amino-acid chain; its full sequence is Cardiolipin synthase A (486 aa).

Transmembrane regions (helical) follow at residues 3 to 23 (TFYT…IAGV) and 38 to 58 (MAWL…YLSF). 2 consecutive PLD phosphodiesterase domains span residues 219 to 246 (MDLR…VDPR) and 399 to 426 (EDGL…DMRS). Catalysis depends on residues H224, K226, D231, H404, K406, and D411.

It belongs to the phospholipase D family. Cardiolipin synthase subfamily. ClsA sub-subfamily.

Its subcellular location is the cell inner membrane. It catalyses the reaction 2 a 1,2-diacyl-sn-glycero-3-phospho-(1'-sn-glycerol) = a cardiolipin + glycerol. Catalyzes the reversible phosphatidyl group transfer from one phosphatidylglycerol molecule to another to form cardiolipin (CL) (diphosphatidylglycerol) and glycerol. The protein is Cardiolipin synthase A of Serratia proteamaculans (strain 568).